Reading from the N-terminus, the 334-residue chain is Glyceraldehyde-3-phosphate dehydrogenase (334 aa).

NAD(+) is bound by residues Arg-11–Ile-12, Asp-33, and Ser-119. D-glyceraldehyde 3-phosphate is bound by residues Ser-149–Thr-151 and Thr-180. Catalysis depends on Cys-150, which acts as the Nucleophile. Asn-181 contributes to the NAD(+) binding site. Residues Arg-197, Thr-210–Gly-211, and Arg-233 contribute to the D-glyceraldehyde 3-phosphate site. Residue Asn-314 participates in NAD(+) binding.

The protein belongs to the glyceraldehyde-3-phosphate dehydrogenase family. Homotetramer.

It is found in the cytoplasm. It carries out the reaction D-glyceraldehyde 3-phosphate + phosphate + NAD(+) = (2R)-3-phospho-glyceroyl phosphate + NADH + H(+). Its pathway is carbohydrate degradation; glycolysis; pyruvate from D-glyceraldehyde 3-phosphate: step 1/5. In terms of biological role, catalyzes the oxidative phosphorylation of glyceraldehyde 3-phosphate (G3P) to 1,3-bisphosphoglycerate (BPG) using the cofactor NAD. The first reaction step involves the formation of a hemiacetal intermediate between G3P and a cysteine residue, and this hemiacetal intermediate is then oxidized to a thioester, with concomitant reduction of NAD to NADH. The reduced NADH is then exchanged with the second NAD, and the thioester is attacked by a nucleophilic inorganic phosphate to produce BPG. The polypeptide is Glyceraldehyde-3-phosphate dehydrogenase (gap) (Clostridium pasteurianum).